Here is a 467-residue protein sequence, read N- to C-terminus: FAD-dependent oxidoreductase dbaF (467 aa).

The signal sequence occupies residues methionine 1–alanine 20. N-linked (GlcNAc...) asparagine glycans are attached at residues asparagine 96, asparagine 134, asparagine 337, asparagine 391, and asparagine 451.

This sequence belongs to the beta-cyclopiazonate dehydrogenase family. FAD serves as cofactor.

Its pathway is secondary metabolite biosynthesis. In terms of biological role, FAD-dependent oxidoreductase; part of the gene cluster that mediates the biosynthesis of the antibiotic 2,4-dihydroxy-3-methyl-6-(2-oxopropyl)benzaldehyde (DHMBA) and its derivatives. The direct non-reducing polyketide synthase dbaI product is 2,4-dihydroxy-3-methyl-6-(2-oxopropyl)benzaldehyde (DHMBA), produced by condensation of one acetyl-CoA starter unit with 4 malonyl-CoA units and one methylation step. The FAD-dependent monooxygenase dbaH is responsible for the synthesis of yellow pigments derived from the oxidation of DHMBA. The roles of dbaB, C, E and F have still to be determined. This is FAD-dependent oxidoreductase dbaF from Emericella nidulans (strain FGSC A4 / ATCC 38163 / CBS 112.46 / NRRL 194 / M139) (Aspergillus nidulans).